Here is a 480-residue protein sequence, read N- to C-terminus: Glutamyl-tRNA(Gln) amidotransferase subunit A (480 aa).

Catalysis depends on charge relay system residues Lys70 and Ser145. Catalysis depends on Ser169, which acts as the Acyl-ester intermediate.

The protein belongs to the amidase family. GatA subfamily. Heterotrimer of A, B and C subunits.

The enzyme catalyses L-glutamyl-tRNA(Gln) + L-glutamine + ATP + H2O = L-glutaminyl-tRNA(Gln) + L-glutamate + ADP + phosphate + H(+). Allows the formation of correctly charged Gln-tRNA(Gln) through the transamidation of misacylated Glu-tRNA(Gln) in organisms which lack glutaminyl-tRNA synthetase. The reaction takes place in the presence of glutamine and ATP through an activated gamma-phospho-Glu-tRNA(Gln). This Lactobacillus delbrueckii subsp. bulgaricus (strain ATCC BAA-365 / Lb-18) protein is Glutamyl-tRNA(Gln) amidotransferase subunit A.